Here is a 461-residue protein sequence, read N- to C-terminus: Coronin-1A (461 aa).

The residue at position 2 (S2) is an N-acetylserine. Position 2 is a phosphoserine; by PKC (S2). 7 WD repeats span residues 13-63, 73-110, 123-160, 164-204, 207-251, 258-296, and 302-349; these read HVFG…LVLP, NVPLVCGHTAPVLDIAWCPHNDNVIASGSEDCTVMVWE, PVITLEGHTKRVGIVAWHPTAQNVLLSAGCDNVILVWD, GAAV…RVIE, KGTV…ALWD, PLSLQELDTSSGVLLPFFDPDTNIVYLCGKGDSSIRYFE, and PFLH…EPIA. A compositionally biased stretch (basic and acidic residues) spans 403 to 418; it reads ELRVNRGLDSARRRAT. A disordered region spans residues 403-434; that stretch reads ELRVNRGLDSARRRATPEPSGTPSSDTVSRLE. S412 is subject to Phosphoserine; by PKC. Residue T418 is modified to Phosphothreonine. Residues 421–430 are compositionally biased toward polar residues; the sequence is PSGTPSSDTV. S422 carries the phosphoserine modification. A coiled-coil region spans residues 424-461; sequence TPSSDTVSRLEEDVRNLNAIVQKLQERLDRLEETVQAK.

The protein belongs to the WD repeat coronin family. As to quaternary structure, binds actin. Phosphorylation at Ser-412 by PKC strongly down-regulates the association with actin. In terms of processing, polyubiquitinated by RNF128 with 'Lys-48'-linked chains, leading to proteasomal degradation. In terms of tissue distribution, expressed in spleen, lymph nodes, thymus, brain and at very lower levels in lung. Also expressed in cells of the lymphoid/myeloid lineage. Not expressed in Kuffper cells.

It localises to the cytoplasm. It is found in the cytoskeleton. The protein resides in the cell cortex. Its subcellular location is the cytoplasmic vesicle. The protein localises to the phagosome membrane. In terms of biological role, may be a crucial component of the cytoskeleton of highly motile cells, functioning both in the invagination of large pieces of plasma membrane, as well as in forming protrusions of the plasma membrane involved in cell locomotion. In mycobacteria-infected cells, its retention on the phagosomal membrane prevents fusion between phagosomes and lysosomes. This chain is Coronin-1A (Coro1a), found in Mus musculus (Mouse).